Here is a 509-residue protein sequence, read N- to C-terminus: Kynureninase 1 (509 aa).

Pyridoxal 5'-phosphate-binding positions include Leu-169, Thr-170, Phe-197 to Asp-200, Asp-283, His-286, and Tyr-308. An N6-(pyridoxal phosphate)lysine modification is found at Lys-309. Trp-349 and Asn-377 together coordinate pyridoxal 5'-phosphate.

It belongs to the kynureninase family. Homodimer. It depends on pyridoxal 5'-phosphate as a cofactor.

It localises to the cytoplasm. The enzyme catalyses L-kynurenine + H2O = anthranilate + L-alanine + H(+). It catalyses the reaction 3-hydroxy-L-kynurenine + H2O = 3-hydroxyanthranilate + L-alanine + H(+). It participates in amino-acid degradation; L-kynurenine degradation; L-alanine and anthranilate from L-kynurenine: step 1/1. The protein operates within cofactor biosynthesis; NAD(+) biosynthesis; quinolinate from L-kynurenine: step 2/3. Catalyzes the cleavage of L-kynurenine (L-Kyn) and L-3-hydroxykynurenine (L-3OHKyn) into anthranilic acid (AA) and 3-hydroxyanthranilic acid (3-OHAA), respectively. In Aspergillus fumigatus (strain CBS 144.89 / FGSC A1163 / CEA10) (Neosartorya fumigata), this protein is Kynureninase 1 (bna5-1).